Consider the following 279-residue polypeptide: Putative pyruvate, phosphate dikinase regulatory protein (279 aa).

An ADP-binding site is contributed by 157–164 (GVSRTSKT).

This sequence belongs to the pyruvate, phosphate/water dikinase regulatory protein family. PDRP subfamily.

It catalyses the reaction N(tele)-phospho-L-histidyl/L-threonyl-[pyruvate, phosphate dikinase] + ADP = N(tele)-phospho-L-histidyl/O-phospho-L-threonyl-[pyruvate, phosphate dikinase] + AMP + H(+). The enzyme catalyses N(tele)-phospho-L-histidyl/O-phospho-L-threonyl-[pyruvate, phosphate dikinase] + phosphate + H(+) = N(tele)-phospho-L-histidyl/L-threonyl-[pyruvate, phosphate dikinase] + diphosphate. Bifunctional serine/threonine kinase and phosphorylase involved in the regulation of the pyruvate, phosphate dikinase (PPDK) by catalyzing its phosphorylation/dephosphorylation. The protein is Putative pyruvate, phosphate dikinase regulatory protein of Lactobacillus helveticus (strain DPC 4571).